The primary structure comprises 397 residues: 3-ketoacyl-CoA thiolase, mitochondrial (397 aa).

The transit peptide at 1–16 (MALLRGVFIVAAKRTP) directs the protein to the mitochondrion; not cleaved. Lys25 is modified (N6-acetyllysine; alternate). Position 25 is an N6-succinyllysine; alternate (Lys25). Phosphoserine is present on Ser28. Lys45 bears the N6-succinyllysine mark. Residue Cys92 is the Acyl-thioester intermediate of the active site. Thr119 carries the phosphothreonine modification. Ser121 carries the phosphoserine modification. Tyr127 is modified (phosphotyrosine). Thr136 is subject to Phosphothreonine. Lys137, Lys143, Lys158, Lys171, Lys191, and Lys209 each carry N6-acetyllysine; alternate. Lys137, Lys143, Lys158, Lys171, Lys191, and Lys209 each carry N6-succinyllysine; alternate. N6-succinyllysine occurs at positions 211, 212, and 214. CoA-binding residues include Arg224 and Thr227. Residue Lys234 is modified to N6-acetyllysine; alternate. Lys234 is subject to N6-succinyllysine; alternate. Lys240 carries the post-translational modification N6-succinyllysine. Lys241 carries the post-translational modification N6-acetyllysine. Ser251 contacts CoA. N6-acetyllysine is present on residues Lys269 and Lys270. An N6-acetyllysine; alternate modification is found at Lys305. An N6-succinyllysine; alternate modification is found at Lys305. Ser310 is subject to Phosphoserine. Lys312 is modified (N6-acetyllysine; alternate). Lys312 is modified (N6-succinyllysine; alternate). The residue at position 340 (Lys340) is an N6-acetyllysine. Ser344 is modified (phosphoserine). N6-acetyllysine is present on Lys375. Cys382 acts as the Proton donor/acceptor in catalysis.

This sequence belongs to the thiolase-like superfamily. Thiolase family. Homotetramer. Interacts with BNIP3.

It localises to the mitochondrion. The enzyme catalyses an acyl-CoA + acetyl-CoA = a 3-oxoacyl-CoA + CoA. It catalyses the reaction 2 acetyl-CoA = acetoacetyl-CoA + CoA. It carries out the reaction acetyl-CoA + H2O = acetate + CoA + H(+). The catalysed reaction is propanoyl-CoA + H2O = propanoate + CoA + H(+). The enzyme catalyses butanoyl-CoA + H2O = butanoate + CoA + H(+). It catalyses the reaction hexanoyl-CoA + H2O = hexanoate + CoA + H(+). It carries out the reaction octanoyl-CoA + H2O = octanoate + CoA + H(+). The catalysed reaction is decanoyl-CoA + H2O = decanoate + CoA + H(+). The enzyme catalyses dodecanoyl-CoA + H2O = dodecanoate + CoA + H(+). It catalyses the reaction tetradecanoyl-CoA + H2O = tetradecanoate + CoA + H(+). It carries out the reaction hexadecanoyl-CoA + H2O = hexadecanoate + CoA + H(+). Its pathway is lipid metabolism; fatty acid beta-oxidation. Its function is as follows. In the production of energy from fats, this is one of the enzymes that catalyzes the last step of the mitochondrial beta-oxidation pathway, an aerobic process breaking down fatty acids into acetyl-CoA. Using free coenzyme A/CoA, catalyzes the thiolytic cleavage of medium- to long-chain unbranched 3-oxoacyl-CoAs into acetyl-CoA and a fatty acyl-CoA shortened by two carbon atoms. Also catalyzes the condensation of two acetyl-CoA molecules into acetoacetyl-CoA and could be involved in the production of ketone bodies. Also displays hydrolase activity on various fatty acyl-CoAs. Thereby, could be responsible for the production of acetate in a side reaction to beta-oxidation. Abolishes BNIP3-mediated apoptosis and mitochondrial damage. This chain is 3-ketoacyl-CoA thiolase, mitochondrial (Acaa2), found in Mus musculus (Mouse).